We begin with the raw amino-acid sequence, 244 residues long: Centromere protein H (244 aa).

M1 bears the N-acetylmethionine mark. Positions 1–33 (METQSEEQAVTKPADSGGEGGPPQVAGAQAARP) are disordered. Phosphoserine is present on S16. Low complexity predominate over residues 22-31 (PPQVAGAQAA). K64 is covalently cross-linked (Glycyl lysine isopeptide (Lys-Gly) (interchain with G-Cter in SUMO2)). A Phosphothreonine modification is found at T65. Coiled coils occupy residues 66–104 (PEQIMQEKQIEAKIEELENEVEEAKTAFEMKKLALDRMQ) and 146–189 (DLEE…MENS).

The protein belongs to the CENP-H/MCM16 family. As to quaternary structure, self-associates. Component of the CENPA-NAC complex, at least composed of CENPA, CENPC, CENPH, CENPM, CENPN, CENPT and CENPU. The CENPA-NAC complex interacts with the CENPA-CAD complex, composed of CENPI, CENPK, CENPL, CENPO, CENPP, CENPQ, CENPR and CENPS. Interacts with KIF2C and NDC80.

Its subcellular location is the nucleus. It localises to the chromosome. The protein resides in the centromere. It is found in the kinetochore. Component of the CENPA-NAC (nucleosome-associated) complex, a complex that plays a central role in assembly of kinetochore proteins, mitotic progression and chromosome segregation. The CENPA-NAC complex recruits the CENPA-CAD (nucleosome distal) complex and may be involved in incorporation of newly synthesized CENPA into centromeres. The chain is Centromere protein H (CENPH) from Bos taurus (Bovine).